The chain runs to 79 residues: MSLTVKCPTCQAPVTWSADSEFKPFCSERCKLIDLGDWASEKNVIPVKSEFDPEMLDQLGYDEADFFLDENPFKDDKNQ.

4 residues coordinate Zn(2+): Cys7, Cys10, Cys26, and Cys30.

This sequence belongs to the DNA gyrase inhibitor YacG family. As to quaternary structure, interacts with GyrB. Zn(2+) serves as cofactor.

Inhibits all the catalytic activities of DNA gyrase by preventing its interaction with DNA. Acts by binding directly to the C-terminal domain of GyrB, which probably disrupts DNA binding by the gyrase. The sequence is that of DNA gyrase inhibitor YacG from Shewanella halifaxensis (strain HAW-EB4).